The following is a 324-amino-acid chain: Calpain-2 catalytic subunit (324 aa).

The interval 1–138 (YPNTFWMNPQ…KKADYQVVDD (138 aa)) is domain III. Residues 139–153 (EIEADLEENDASEDD) form a linker region. The interval 158-324 (FRRLFAQLAG…LISWLCFSVL (167 aa)) is domain IV. The Ca(2+) site is built by Ala-166, Asp-169, Glu-171, Glu-176, Asp-209, Asp-211, Ser-213, Lys-215, Glu-220, Asp-239, Asp-241, Ser-243, Thr-245, Glu-250, Asp-282, and Asn-285. 2 consecutive EF-hand domains span residues 190 to 224 (DIKS…FYIL) and 226 to 261 (TKIQ…AGFK).

It belongs to the peptidase C2 family. Forms a heterodimer with a small (regulatory) subunit (CAPNS1). Interacts with CPEB3; this leads to cleavage of CPEB3. Ca(2+) serves as cofactor. In terms of tissue distribution, ubiquitous.

The protein localises to the cytoplasm. Its subcellular location is the cell membrane. It catalyses the reaction Broad endopeptidase specificity.. Activated by 200-1000 micromolar concentrations of calcium and inhibited by calpastatin. Calcium-regulated non-lysosomal thiol-protease which catalyzes limited proteolysis of substrates involved in cytoskeletal remodeling and signal transduction. Proteolytically cleaves MYOC at 'Arg-226'. Proteolytically cleaves CPEB3 following neuronal stimulation which abolishes CPEB3 translational repressor activity, leading to translation of CPEB3 target mRNAs. The sequence is that of Calpain-2 catalytic subunit (CAPN2) from Sus scrofa (Pig).